The chain runs to 211 residues: Thymidine kinase (211 aa).

ATP is bound by residues 9-16 (STMNAGKS) and 87-90 (DEAQ). Residue glutamate 88 is the Proton acceptor of the active site. Residues cysteine 145, cysteine 147, cysteine 182, and histidine 185 each contribute to the Zn(2+) site.

Belongs to the thymidine kinase family. In terms of assembly, homotetramer.

It is found in the cytoplasm. The catalysed reaction is thymidine + ATP = dTMP + ADP + H(+). The protein is Thymidine kinase of Rhodopirellula baltica (strain DSM 10527 / NCIMB 13988 / SH1).